The sequence spans 689 residues: DNA ligase (689 aa).

NAD(+)-binding positions include 40 to 44 (DAEYD), 89 to 90 (SL), and E121. The active-site N6-AMP-lysine intermediate is K123. NAD(+) is bound by residues R144, E179, K295, and K319. Zn(2+)-binding residues include C413, C416, C431, and C437. The BRCT domain occupies 610–689 (REQSSLTGKI…AEWLTLVRDI (80 aa)).

The protein belongs to the NAD-dependent DNA ligase family. LigA subfamily. The cofactor is Mg(2+). Mn(2+) serves as cofactor.

The catalysed reaction is NAD(+) + (deoxyribonucleotide)n-3'-hydroxyl + 5'-phospho-(deoxyribonucleotide)m = (deoxyribonucleotide)n+m + AMP + beta-nicotinamide D-nucleotide.. In terms of biological role, DNA ligase that catalyzes the formation of phosphodiester linkages between 5'-phosphoryl and 3'-hydroxyl groups in double-stranded DNA using NAD as a coenzyme and as the energy source for the reaction. It is essential for DNA replication and repair of damaged DNA. In Rickettsia bellii (strain OSU 85-389), this protein is DNA ligase.